Reading from the N-terminus, the 176-residue chain is Telomerase RNA component interacting RNase (176 aa).

A compositionally biased stretch (basic and acidic residues) spans 1–12; sequence MAARGRRAEPQG. Residues 1 to 121 are disordered; the sequence is MAARGRRAEP…TLSFVGKRRG (121 aa). Low complexity predominate over residues 45 to 56; it reads SGAGSSPVSGGV. Positions 68–83 are enriched in basic and acidic residues; that stretch reads LFKRKMEEEQRQRQEE. The span at 90–101 shows a compositional bias: low complexity; it reads RPDQSAAAAGPG. Lys-146 carries the post-translational modification N6-acetyllysine.

As to quaternary structure, part of the telomerase RNA 3' end complex which contains about 488 proteins.

With respect to regulation, zn(2+) inhibits the RNase activity while Mg(2+), Ca(2+), Mn(2+), K(+), Na(+), EDTA and EGTA show little effect on the exoribonuclease activity. In terms of biological role, exoribonuclease that is part of the telomerase RNA 3' end processing complex and which has the ability to cleave all four unpaired RNA nucleotides from the 5' end or 3' end with higher efficiency for purine bases. In Homo sapiens (Human), this protein is Telomerase RNA component interacting RNase.